The primary structure comprises 398 residues: 8-amino-7-oxononanoate synthase (398 aa).

Arg23 is a binding site for substrate. 110–111 serves as a coordination point for pyridoxal 5'-phosphate; it reads GY. His135 is a substrate binding site. 3 residues coordinate pyridoxal 5'-phosphate: Ser181, His209, and Thr238. At Lys241 the chain carries N6-(pyridoxal phosphate)lysine. A substrate-binding site is contributed by Thr355.

This sequence belongs to the class-II pyridoxal-phosphate-dependent aminotransferase family. BioF subfamily. As to quaternary structure, homodimer. Requires pyridoxal 5'-phosphate as cofactor.

It carries out the reaction 6-carboxyhexanoyl-[ACP] + L-alanine + H(+) = (8S)-8-amino-7-oxononanoate + holo-[ACP] + CO2. The protein operates within cofactor biosynthesis; biotin biosynthesis. In terms of biological role, catalyzes the decarboxylative condensation of pimeloyl-[acyl-carrier protein] and L-alanine to produce 8-amino-7-oxononanoate (AON), [acyl-carrier protein], and carbon dioxide. The polypeptide is 8-amino-7-oxononanoate synthase (Cellvibrio japonicus (strain Ueda107) (Pseudomonas fluorescens subsp. cellulosa)).